The primary structure comprises 450 residues: Keratin, type I cytoskeletal 25 (450 aa).

Positions 1–25 are disordered; sequence MSLRLPSGSRRASPRPTTGSLRLSS. A head region spans residues 1–78; it reads MSLRLPSGSR…VNEGGLLSGN (78 aa). The segment at 79–114 is coil 1A; sequence EKVTMQNLNDRLASYLENVRALEEANADLEQKIKGW. The 316-residue stretch at 79 to 394 folds into the IF rod domain; that stretch reads EKVTMQNLND…LLIGGDDGAC (316 aa). The tract at residues 115–136 is linker 1; sequence YEKFGPGSCRGLDHDYSRYFPI. The tract at residues 137-228 is coil 1B; it reads IEDLKNQIIA…KNHKEEMQVL (92 aa). Residues 229 to 251 are linker 12; that stretch reads QCAAGGNVNVEMNAAPGVDLTVL. Residues 252 to 390 are coil 2; the sequence is LNNMRAEYEA…ETYCLLIGGD (139 aa). The tract at residues 391–450 is tail; sequence DGACKSGGYKSKDYGAGNVGNQMKDPVKAIVVKKVLEEVDQRSKILTPRLHSLEEKSQSN. At serine 442 the chain carries Phosphoserine.

It belongs to the intermediate filament family. As to quaternary structure, heterodimer of a type I and a type II keratin. Heterodimer with type II keratin KRT5 leading to the formation of keratin intermediate filament (KIF) network. Interacts with KRT6A to form filaments.

The protein localises to the cytoplasm. Functionally, essential for the proper assembly of type I and type II keratin protein complexes and formation of keratin intermediate filaments in the inner root sheath (irs). Plays a role in the cytoskeleton organization. This Bos taurus (Bovine) protein is Keratin, type I cytoskeletal 25.